Here is a 425-residue protein sequence, read N- to C-terminus: Alpha-muurolene synthase (425 aa).

Residues Asp-97, Asp-101, Asn-240, Ser-244, and Glu-248 each contribute to the Mg(2+) site. The DDXXD motif signature appears at 97-101; sequence DNISD. The tract at residues 348–382 is disordered; the sequence is VAPPPPPPPPTPPPQSSDADTKKQKVKAQDGKGPV. Pro residues predominate over residues 349-362; sequence APPPPPPPPTPPPQ. Residues 366–377 are compositionally biased toward basic and acidic residues; sequence ADTKKQKVKAQD.

This sequence belongs to the terpene synthase family. Mg(2+) serves as cofactor.

It catalyses the reaction (2E,6E)-farnesyl diphosphate = alpha-muurolene + diphosphate. It carries out the reaction (2E,6E)-farnesyl diphosphate = gamma-muurolene + diphosphate. The catalysed reaction is (2E,6E)-farnesyl diphosphate = (+)-(R)-germacrene A + diphosphate. In terms of biological role, sesquiterpene synthase that catalyzes the formation of alpha-muurolene, and at lower level (+)-(R)-germacrene A and gamma-muurolene. In Coprinopsis cinerea (strain Okayama-7 / 130 / ATCC MYA-4618 / FGSC 9003) (Inky cap fungus), this protein is Alpha-muurolene synthase (COP3).